A 261-amino-acid chain; its full sequence is MNYKQSSPEVLRQLIRDGELVGHTSGMAEGYIQANVVILPSKYAYDFLKFCFRNPKTCPLLDVSEVGAHSFPYYGPYADIRTDVPKYRIYEHGQLIKEVDDITDLYTEDMVSFLIGCSFTFEHALLEAGLPVRHIEEGHNVPMYRTNIPAESSGYFKGNITVSMRPMTMTQAIKATEITSHFKNVHGTPIHIGTPEELGITDIDKPDYGEAVTIKPNEMPVFWGCGVTPQSVALDAKPELMITHSPGHMFITDIKDSELND.

This sequence belongs to the D-glutamate cyclase family.

The chain is Putative hydro-lyase SH0274 from Staphylococcus haemolyticus (strain JCSC1435).